The following is a 60-amino-acid chain: uncharacterized protein (60 aa).

Residues 14-34 (MLFLGTIGLAVVVGGLMAYGY) traverse the membrane as a helical segment. The disordered stretch occupies residues 38-60 (GKTPSSGTSFHTASPSFSSRYRY). Residues 40–60 (TPSSGTSFHTASPSFSSRYRY) are compositionally biased toward polar residues.

It is found in the host membrane. This is an uncharacterized protein from Dryophytes versicolor (chameleon treefrog).